Here is a 352-residue protein sequence, read N- to C-terminus: tRNA pseudouridine synthase D (352 aa).

Aspartate 81 functions as the Nucleophile in the catalytic mechanism. A TRUD domain is found at 157–303; the sequence is GVPNYFGAQR…MDHERRILRL (147 aa).

The protein belongs to the pseudouridine synthase TruD family.

The enzyme catalyses uridine(13) in tRNA = pseudouridine(13) in tRNA. Functionally, responsible for synthesis of pseudouridine from uracil-13 in transfer RNAs. This Pseudomonas entomophila (strain L48) protein is tRNA pseudouridine synthase D.